The chain runs to 225 residues: UPF0758 protein Shew_3481 (225 aa).

Residues 102 to 224 form the MPN domain; the sequence is ILSDPDLTRD…IVSFAERGWI (123 aa). Zn(2+) is bound by residues His-173, His-175, and Asp-186. The JAMM motif motif lies at 173-186; it reads HNHPSGGAEPSHAD.

Belongs to the UPF0758 family.

This Shewanella loihica (strain ATCC BAA-1088 / PV-4) protein is UPF0758 protein Shew_3481.